The sequence spans 355 residues: Ion-translocating oxidoreductase complex subunit D (355 aa).

The next 5 helical transmembrane spans lie at 13–33 (GKLT…ALAV), 35–55 (VYYF…LALI), 77–97 (VILT…YWVI), 98–118 (LIGT…LGQN), and 128–148 (VVLL…ISLL). T186 is subject to FMN phosphoryl threonine. Transmembrane regions (helical) follow at residues 216–236 (AGLG…FLIW), 245–265 (PVAI…FGNA), 267–287 (AVGF…FFIA), 294–314 (PVTP…ICLI), and 318–338 (GNYP…VPLI).

This sequence belongs to the NqrB/RnfD family. As to quaternary structure, the complex is composed of six subunits: RnfA, RnfB, RnfC, RnfD, RnfE and RnfG. It depends on FMN as a cofactor.

The protein localises to the cell inner membrane. Functionally, part of a membrane-bound complex that couples electron transfer with translocation of ions across the membrane. This Actinobacillus succinogenes (strain ATCC 55618 / DSM 22257 / CCUG 43843 / 130Z) protein is Ion-translocating oxidoreductase complex subunit D.